Reading from the N-terminus, the 133-residue chain is Large ribosomal subunit protein bL17 (133 aa).

Belongs to the bacterial ribosomal protein bL17 family. As to quaternary structure, part of the 50S ribosomal subunit. Contacts protein L32.

The protein is Large ribosomal subunit protein bL17 of Thermodesulfovibrio yellowstonii (strain ATCC 51303 / DSM 11347 / YP87).